Here is a 248-residue protein sequence, read N- to C-terminus: 1-(5-phosphoribosyl)-5-[(5-phosphoribosylamino)methylideneamino] imidazole-4-carboxamide isomerase (248 aa).

D17 serves as the catalytic Proton acceptor. D136 serves as the catalytic Proton donor.

The protein belongs to the HisA/HisF family.

Its subcellular location is the cytoplasm. The catalysed reaction is 1-(5-phospho-beta-D-ribosyl)-5-[(5-phospho-beta-D-ribosylamino)methylideneamino]imidazole-4-carboxamide = 5-[(5-phospho-1-deoxy-D-ribulos-1-ylimino)methylamino]-1-(5-phospho-beta-D-ribosyl)imidazole-4-carboxamide. It participates in amino-acid biosynthesis; L-histidine biosynthesis; L-histidine from 5-phospho-alpha-D-ribose 1-diphosphate: step 4/9. This is 1-(5-phosphoribosyl)-5-[(5-phosphoribosylamino)methylideneamino] imidazole-4-carboxamide isomerase from Arthrobacter sp. (strain FB24).